The chain runs to 264 residues: Thymidylate synthase (264 aa).

Position 21 (Arg-21) interacts with dUMP. His-51 is a binding site for (6R)-5,10-methylene-5,6,7,8-tetrahydrofolate. 126-127 (RR) provides a ligand contact to dUMP. The active-site Nucleophile is Cys-146. Residues 166-169 (RSAD), Asn-177, and 207-209 (HLY) each bind dUMP. Residue Asp-169 coordinates (6R)-5,10-methylene-5,6,7,8-tetrahydrofolate. Position 263 (Ala-263) interacts with (6R)-5,10-methylene-5,6,7,8-tetrahydrofolate.

This sequence belongs to the thymidylate synthase family. Bacterial-type ThyA subfamily. Homodimer.

It is found in the cytoplasm. It carries out the reaction dUMP + (6R)-5,10-methylene-5,6,7,8-tetrahydrofolate = 7,8-dihydrofolate + dTMP. It functions in the pathway pyrimidine metabolism; dTTP biosynthesis. Its function is as follows. Catalyzes the reductive methylation of 2'-deoxyuridine-5'-monophosphate (dUMP) to 2'-deoxythymidine-5'-monophosphate (dTMP) while utilizing 5,10-methylenetetrahydrofolate (mTHF) as the methyl donor and reductant in the reaction, yielding dihydrofolate (DHF) as a by-product. This enzymatic reaction provides an intracellular de novo source of dTMP, an essential precursor for DNA biosynthesis. This Pseudomonas aeruginosa (strain LESB58) protein is Thymidylate synthase.